The following is a 160-amino-acid chain: SsrA-binding protein (160 aa).

It belongs to the SmpB family.

Its subcellular location is the cytoplasm. Its function is as follows. Required for rescue of stalled ribosomes mediated by trans-translation. Binds to transfer-messenger RNA (tmRNA), required for stable association of tmRNA with ribosomes. tmRNA and SmpB together mimic tRNA shape, replacing the anticodon stem-loop with SmpB. tmRNA is encoded by the ssrA gene; the 2 termini fold to resemble tRNA(Ala) and it encodes a 'tag peptide', a short internal open reading frame. During trans-translation Ala-aminoacylated tmRNA acts like a tRNA, entering the A-site of stalled ribosomes, displacing the stalled mRNA. The ribosome then switches to translate the ORF on the tmRNA; the nascent peptide is terminated with the 'tag peptide' encoded by the tmRNA and targeted for degradation. The ribosome is freed to recommence translation, which seems to be the essential function of trans-translation. The polypeptide is SsrA-binding protein (Sodalis glossinidius (strain morsitans)).